The following is a 391-amino-acid chain: Polyisoprenyl-teichoic acid--peptidoglycan teichoic acid transferase TagV (391 aa).

At 1-23 (MAERVRVRVRKKKKSKRRKILKR) the chain is on the cytoplasmic side. A helical; Signal-anchor for type II membrane protein membrane pass occupies residues 24 to 44 (IMLLFALALLVVVGLGGYKLY). Topologically, residues 45–391 (KTINAADESY…TTNSTTDSSY (347 aa)) are extracellular. The disordered stretch occupies residues 329–391 (DYTPDTSTGT…TTNSTTDSSY (63 aa)). Residues 333–391 (DTSTGTSGTEDGTDSSSSSGSTGSTGTTTDGTTNGSSYSNDSSTSSNNSTTNSTTDSSY) show a composition bias toward low complexity.

It belongs to the LytR/CpsA/Psr (LCP) family.

It is found in the cell membrane. The protein operates within cell wall biogenesis. Functionally, may catalyze the final step in cell wall teichoic acid biosynthesis, the transfer of the anionic cell wall polymers (APs) from their lipid-linked precursor to the cell wall peptidoglycan (PG). The polypeptide is Polyisoprenyl-teichoic acid--peptidoglycan teichoic acid transferase TagV (Bacillus subtilis (strain 168)).